The sequence spans 230 residues: MKRDERWEGVYSFEDSPFIMEILTELRDESTGPIAFRKGLVKLGRYMAYEITKTMATEKVPIRTPLEETEGIIVKDRRNVVIITVLRAAIPLMEGLIKVFEHARVGIVSASRGKAPKFEIEMKYVKVPRIKAEDTVIIADPMIATGSTLIKVLDEVKKYGNAKRYVVVGVLAAPEGITRIKEAHPDVEMFVAAIDRELNDHGYILPGLGDAGDRAFGEPIRFEDGAPGGI.

Residue 38–42 (KGLVK) participates in GTP binding. 5-phospho-alpha-D-ribose 1-diphosphate-binding positions include Arg-87, Arg-112, and 140–148 (DPMIATGST). Uracil is bound by residues Ile-204 and 209-211 (GDA). Asp-210 lines the 5-phospho-alpha-D-ribose 1-diphosphate pocket.

It belongs to the UPRTase family. The cofactor is Mg(2+).

The enzyme catalyses UMP + diphosphate = 5-phospho-alpha-D-ribose 1-diphosphate + uracil. The protein operates within pyrimidine metabolism; UMP biosynthesis via salvage pathway; UMP from uracil: step 1/1. With respect to regulation, allosterically activated by GTP. In terms of biological role, catalyzes the conversion of uracil and 5-phospho-alpha-D-ribose 1-diphosphate (PRPP) to UMP and diphosphate. In Thermococcus kodakarensis (strain ATCC BAA-918 / JCM 12380 / KOD1) (Pyrococcus kodakaraensis (strain KOD1)), this protein is Uracil phosphoribosyltransferase.